We begin with the raw amino-acid sequence, 595 residues long: Aspartate--tRNA(Asp/Asn) ligase (595 aa).

Glu-177 lines the L-aspartate pocket. The segment at 201-204 is aspartate; the sequence is QQFK. Residue Arg-223 coordinates L-aspartate. ATP-binding positions include 223–225 and Gln-232; that span reads RDE. His-455 is an L-aspartate binding site. Glu-489 is a binding site for ATP. L-aspartate is bound at residue Arg-496. 542–545 serves as a coordination point for ATP; the sequence is GLDR.

Belongs to the class-II aminoacyl-tRNA synthetase family. Type 1 subfamily. Homodimer.

The protein localises to the cytoplasm. The catalysed reaction is tRNA(Asx) + L-aspartate + ATP = L-aspartyl-tRNA(Asx) + AMP + diphosphate. Functionally, aspartyl-tRNA synthetase with relaxed tRNA specificity since it is able to aspartylate not only its cognate tRNA(Asp) but also tRNA(Asn). Reaction proceeds in two steps: L-aspartate is first activated by ATP to form Asp-AMP and then transferred to the acceptor end of tRNA(Asp/Asn). This is Aspartate--tRNA(Asp/Asn) ligase from Opitutus terrae (strain DSM 11246 / JCM 15787 / PB90-1).